The following is a 689-amino-acid chain: MSEKTFLVEIGTEELPPKALRSLAESFAANFTAELDNAGLAHGNVEWFAAPRRLALKVANLAESQPDREVEKRGPAIAQAFDAEGKPSKAAEGWARGCGITVDQAERLKTDKGEWLLYRAHVKGESTEALVPNMVATSLAKLPIPKLMRWGASDVHFVRPVHTVTLLLGDKVIPATILGIQSDRVIRGHRFMGEPEFTIDNADQYPQILLERGKVIADYEARKAKIKADAEEAARKIGGNADLSESLLEEVASLVEWPVVLTAKFEEKFLSVPAEALVYTMKGDQKYFPVYDNAGKLLPNFIFVANIESKDPTQIISGNEKVVRPRLADAEFFFNTDRKKRLEDHLPRLQTVLFQQQLGTLRDKTDRIQALAGWIAGQIGADVNHATRAGLLSKCDLMTNMVFEFTDTQGVMGMHYARHDGEAEDVAVALNEQYQPRFAGDDLPSNPVACALAIADKMDTLAGIFGIGQHPKGDKDPFALRRAALGVLRIIVEKNLALDLQTLTEEAVRLYGDKLTNANVVDDVIDFMLGRFRAWYQDEGYTVDTIQAVLARRPTRPADFDARMKAVSHFRTLEEASALAAANKRVSNILAKATEPLNDIVHASVLKEAAEIELARHLVVLRDKLQPYFADGRYQEALIELAALRAPVDEFFENVMVNAEEKDIRINRLTLLSKLRELFLQVADISLLQ.

The protein belongs to the class-II aminoacyl-tRNA synthetase family. As to quaternary structure, tetramer of two alpha and two beta subunits.

The protein localises to the cytoplasm. It catalyses the reaction tRNA(Gly) + glycine + ATP = glycyl-tRNA(Gly) + AMP + diphosphate. The sequence is that of Glycine--tRNA ligase beta subunit from Salmonella dublin (strain CT_02021853).